Here is a 447-residue protein sequence, read N- to C-terminus: Phosphoglucosamine mutase (447 aa).

Residue serine 100 is the Phosphoserine intermediate of the active site. Mg(2+) contacts are provided by serine 100, aspartate 239, aspartate 241, and aspartate 243. Serine 100 carries the post-translational modification Phosphoserine.

It belongs to the phosphohexose mutase family. Mg(2+) is required as a cofactor. Activated by phosphorylation.

It catalyses the reaction alpha-D-glucosamine 1-phosphate = D-glucosamine 6-phosphate. Catalyzes the conversion of glucosamine-6-phosphate to glucosamine-1-phosphate. The polypeptide is Phosphoglucosamine mutase (Dictyoglomus turgidum (strain DSM 6724 / Z-1310)).